Here is a 411-residue protein sequence, read N- to C-terminus: Glutamate dehydrogenase (411 aa).

Residue Lys-102 is part of the active site.

This sequence belongs to the Glu/Leu/Phe/Val dehydrogenases family.

It catalyses the reaction L-glutamate + NAD(+) + H2O = 2-oxoglutarate + NH4(+) + NADH + H(+). The enzyme catalyses L-glutamate + NADP(+) + H2O = 2-oxoglutarate + NH4(+) + NADPH + H(+). This chain is Glutamate dehydrogenase (GDH), found in Vitis vinifera (Grape).